Reading from the N-terminus, the 226-residue chain is Lysosomal-associated transmembrane protein 4B (226 aa).

4 helical membrane passes run 26-46, 72-92, 100-120, and 153-173; these read ILLG…LLSA, MCIA…ATYG, WIIP…LVAI, and CLVL…GYLI. A required for NEDD4 interaction region spans residues 205 to 221; that stretch reads PPYDDATVNGAAKEPPP.

The protein belongs to the LAPTM4/LAPTM5 transporter family. In terms of assembly, homooligomer; upon reaching the lysosomes. Interacts with MCOLN1. Interacts with NEDD4; may play a role in the lysosomal sorting of LAPTM4B; enhances HGS association with NEDD4; mediates inhibition of EGFR degradation. Interacts with PIP5K1C; promotes SNX5 association with LAPTM4B; kinase activity of PIP5K1C is required; interaction is regulated by phosphatidylinositol 4,5-bisphosphate generated by PIP5K1C. Interacts with HGS; promotes HGS ubiquitination. Interacts with SNX5. Interacts with SLC3A2 and SLC7A5; recruits SLC3A2 and SLC7A5 to lysosomes to promote leucine uptake into these organelles and is required for mTORC1 activation. Interacts with LRRC32; decreases TGFB1 production in regulatory T cells. Interacts with BECN1; competes with EGFR for LAPTM4B binding; regulates EGFR activity. Interacts with EGFR; positively correlates with EGFR activation. Undergoes proteolytic cleavage following delivery to the lysosomes. In terms of processing, ubiquitinated by NEDD4.

Its subcellular location is the endomembrane system. It localises to the late endosome membrane. It is found in the cell membrane. The protein localises to the cell projection. The protein resides in the lysosome membrane. Its subcellular location is the endosome membrane. It localises to the endosome. It is found in the multivesicular body membrane. The protein localises to the multivesicular body lumen. Functionally, required for optimal lysosomal function. Blocks EGF-stimulated EGFR intraluminal sorting and degradation. Conversely by binding with the phosphatidylinositol 4,5-bisphosphate, regulates its PIP5K1C interaction, inhibits HGS ubiquitination and relieves LAPTM4B inhibition of EGFR degradation. Recruits SLC3A2 and SLC7A5 (the Leu transporter) to the lysosome, promoting entry of leucine and other essential amino acid (EAA) into the lysosome, stimulating activation of proton-transporting vacuolar (V)-ATPase protein pump (V-ATPase) and hence mTORC1 activation. Plays a role as negative regulator of TGFB1 production in regulatory T cells. Binds ceramide and facilitates its exit from late endosome in order to control cell death pathways. This Macaca fascicularis (Crab-eating macaque) protein is Lysosomal-associated transmembrane protein 4B.